Consider the following 434-residue polypeptide: Tol-Pal system protein TolB (434 aa).

Positions 1–21 (MIVRRALALAALALAASPALA) are cleaved as a signal peptide. Residues 411 to 434 (GDRQTPVTSGKTDLAAPAWGPLAP) form a disordered region.

Belongs to the TolB family. As to quaternary structure, the Tol-Pal system is composed of five core proteins: the inner membrane proteins TolA, TolQ and TolR, the periplasmic protein TolB and the outer membrane protein Pal. They form a network linking the inner and outer membranes and the peptidoglycan layer.

The protein localises to the periplasm. Its function is as follows. Part of the Tol-Pal system, which plays a role in outer membrane invagination during cell division and is important for maintaining outer membrane integrity. The protein is Tol-Pal system protein TolB of Anaeromyxobacter sp. (strain K).